The primary structure comprises 141 residues: Hemoglobin subunit alpha (141 aa).

The Globin domain occupies 1–141; it reads VLSSADKNNV…VSTVLTSKYR (141 aa). S3 is subject to Phosphoserine. K7 and K11 each carry N6-succinyllysine. At K16 the chain carries N6-acetyllysine; alternate. Residue K16 is modified to N6-succinyllysine; alternate. Y24 carries the phosphotyrosine modification. S35 carries the post-translational modification Phosphoserine. K40 carries the N6-succinyllysine modification. At S49 the chain carries Phosphoserine. Position 58 (H58) interacts with O2. Heme b is bound at residue H87. Residue S102 is modified to Phosphoserine. At T108 the chain carries Phosphothreonine. S124 carries the phosphoserine modification. A phosphothreonine mark is found at T134 and T137. At S138 the chain carries Phosphoserine.

It belongs to the globin family. As to quaternary structure, heterotetramer of two alpha chains and two beta chains. As to expression, red blood cells.

Functionally, involved in oxygen transport from the lung to the various peripheral tissues. In terms of biological role, hemopressin acts as an antagonist peptide of the cannabinoid receptor CNR1. Hemopressin-binding efficiently blocks cannabinoid receptor CNR1 and subsequent signaling. The sequence is that of Hemoglobin subunit alpha (HBA) from Panthera tigris sumatrae (Sumatran tiger).